We begin with the raw amino-acid sequence, 172 residues long: Translation initiation factor IF-3 (172 aa).

Belongs to the IF-3 family. As to quaternary structure, monomer.

The protein localises to the cytoplasm. Its function is as follows. IF-3 binds to the 30S ribosomal subunit and shifts the equilibrium between 70S ribosomes and their 50S and 30S subunits in favor of the free subunits, thus enhancing the availability of 30S subunits on which protein synthesis initiation begins. In Geobacter metallireducens (strain ATCC 53774 / DSM 7210 / GS-15), this protein is Translation initiation factor IF-3.